Consider the following 604-residue polypeptide: Elongation factor 4 (604 aa).

Residues 10–191 enclose the tr-type G domain; it reads KNIRNFSIIA…KIITTIPAPS (182 aa). GTP-binding positions include 22-27 and 138-141; these read DHGKST and NKID.

It belongs to the TRAFAC class translation factor GTPase superfamily. Classic translation factor GTPase family. LepA subfamily.

It is found in the cell inner membrane. The catalysed reaction is GTP + H2O = GDP + phosphate + H(+). Its function is as follows. Required for accurate and efficient protein synthesis under certain stress conditions. May act as a fidelity factor of the translation reaction, by catalyzing a one-codon backward translocation of tRNAs on improperly translocated ribosomes. Back-translocation proceeds from a post-translocation (POST) complex to a pre-translocation (PRE) complex, thus giving elongation factor G a second chance to translocate the tRNAs correctly. Binds to ribosomes in a GTP-dependent manner. In Helicobacter pylori (strain J99 / ATCC 700824) (Campylobacter pylori J99), this protein is Elongation factor 4.